Here is a 417-residue protein sequence, read N- to C-terminus: Phosphoglycerate kinase 1 (417 aa).

Ser2 carries the post-translational modification N-acetylserine. Residues Ser2 and Ser4 each carry the phosphoserine modification. Lys6 is modified (N6-succinyllysine). Lys11 is subject to N6-acetyllysine. Val23, Asp24, Phe25, Asn26, Gln38, Arg39, Ser62, His63, Gly65, and Arg66 together coordinate (2R)-3-phosphoglycerate. A mitochondrial targeting region exposed following cis-trans isomerization by PIN1 and recognized by the TOM complex for mitochondrial translocation of the protein region spans residues 38 to 43 (QRIKAA). The residue at position 75 (Lys75) is an N6-acetyllysine. Tyr76 is subject to Phosphotyrosine. N6-acetyllysine is present on residues Lys86 and Lys91. At Lys97 the chain carries N6-(2-hydroxyisobutyryl)lysine; alternate. Position 97 is an N6-acetyllysine; alternate (Lys97). (2R)-3-phosphoglycerate contacts are provided by Leu122 and Arg123. Residue Lys131 is modified to N6-acetyllysine; alternate. N6-malonyllysine; alternate is present on Lys131. Lys146 carries the N6-acetyllysine modification. (2R)-3-phosphoglycerate is bound by residues His170 and Arg171. Lys191 is modified (N6-succinyllysine). Residue Tyr196 is modified to Phosphotyrosine. Lys199 is subject to N6-acetyllysine. Position 203 is a phosphoserine (Ser203). Gly214 contributes to the ADP binding site. CDP is bound at residue Gly214. The AMP site is built by Ala215 and Lys216. Residue Ala215 coordinates ATP. Residue Ala215 participates in Mg(2+) binding. The residue at position 216 (Lys216) is an N6-(2-hydroxyisobutyryl)lysine. Mg(2+) contacts are provided by Ala218 and Asp219. Asp219 contacts CDP. Lys220 is a binding site for AMP. An ATP-binding site is contributed by Lys220. N6-(2-hydroxyisobutyryl)lysine is present on Lys220. Residue Gly238 coordinates ADP. Gly238 contributes to the CDP binding site. Gly239 contacts AMP. Gly239 is a binding site for ATP. N6-acetyllysine is present on residues Lys267 and Lys291. Residue Gly313 participates in AMP binding. Residue Gly313 coordinates ATP. At Lys323 the chain carries N6-(2-hydroxyisobutyryl)lysine. Gly338, Val340, and Phe343 together coordinate CDP. Phe343 contributes to the ADP binding site. Glu344 is a binding site for AMP. ATP is bound by residues Glu344, Asp375, and Thr376. Residue Asp375 coordinates Mg(2+).

The protein belongs to the phosphoglycerate kinase family. As to quaternary structure, monomer. Interacts with kinase MAPK1/ERK2; the interaction is direct, occurs under hypoxic conditions, and promotes its interaction with PIN1. Interacts with peptidyl-prolyl cis-trans isomerase PIN1; the interaction is direct, occurs under hypoxic conditions, and targets the protein to the mitochondrion by promoting interactions with the TOM complex. Interacts with mitochondrial circRNA mcPGK1 (via its 2nd stem-loop); the interaction is direct and targets the protein to the mitochondrion by promoting interactions with the TOM complex. Interacts with pyruvate dehydrogenase kinase PDK1; the interaction is direct, occurs under hypoxic conditions and leads to PDK1-mediated inhibition of pyruvate dehydrogenase complex activity. It depends on Mg(2+) as a cofactor. Post-translationally, phosphorylated at Ser-203 by MAPK1/ERK2 under hypoxic conditions, which promotes its mitochondrial targeting.

The protein resides in the cytoplasm. It localises to the cytosol. It is found in the mitochondrion matrix. It carries out the reaction (2R)-3-phosphoglycerate + ATP = (2R)-3-phospho-glyceroyl phosphate + ADP. It catalyses the reaction L-seryl-[protein] + ATP = O-phospho-L-seryl-[protein] + ADP + H(+). It functions in the pathway carbohydrate degradation; glycolysis; pyruvate from D-glyceraldehyde 3-phosphate: step 2/5. Functionally, catalyzes one of the two ATP producing reactions in the glycolytic pathway via the reversible conversion of 1,3-diphosphoglycerate to 3-phosphoglycerate. Both L- and D- forms of purine and pyrimidine nucleotides can be used as substrates, but the activity is much lower on pyrimidines. In addition to its role as a glycolytic enzyme, it seems that PGK-1 acts as a polymerase alpha cofactor protein (primer recognition protein). Acts as a protein kinase when localized to the mitochondrion where it phosphorylates pyruvate dehydrogenase kinase PDK1 to inhibit pyruvate dehydrogenase complex activity and suppress the formation of acetyl-coenzyme A from pyruvate, and consequently inhibit oxidative phosphorylation and promote glycolysis. May play a role in sperm motility. The chain is Phosphoglycerate kinase 1 (PGK1) from Notamacropus eugenii (Tammar wallaby).